A 207-amino-acid polypeptide reads, in one-letter code: Peptidyl-tRNA hydrolase (207 aa).

Tyr14 serves as a coordination point for tRNA. His19 functions as the Proton acceptor in the catalytic mechanism. The tRNA site is built by Phe68, Asn70, and Asn116.

The protein belongs to the PTH family. Monomer.

The protein localises to the cytoplasm. The enzyme catalyses an N-acyl-L-alpha-aminoacyl-tRNA + H2O = an N-acyl-L-amino acid + a tRNA + H(+). Its function is as follows. Hydrolyzes ribosome-free peptidyl-tRNAs (with 1 or more amino acids incorporated), which drop off the ribosome during protein synthesis, or as a result of ribosome stalling. Functionally, catalyzes the release of premature peptidyl moieties from peptidyl-tRNA molecules trapped in stalled 50S ribosomal subunits, and thus maintains levels of free tRNAs and 50S ribosomes. This Hyphomonas neptunium (strain ATCC 15444) protein is Peptidyl-tRNA hydrolase.